We begin with the raw amino-acid sequence, 272 residues long: Undecaprenyl-diphosphatase (272 aa).

7 consecutive transmembrane segments (helical) span residues 42–62 (FGLS…VVFF), 92–112 (YLVL…EDFF), 120–140 (WVVV…EAVG), 149–169 (MGFA…VPGV), 194–214 (FLMS…EVLA), 224–244 (MFAV…RFFI), and 252–272 (LRAF…LLLL).

The protein belongs to the UppP family.

The protein resides in the cell membrane. The enzyme catalyses di-trans,octa-cis-undecaprenyl diphosphate + H2O = di-trans,octa-cis-undecaprenyl phosphate + phosphate + H(+). Its function is as follows. Catalyzes the dephosphorylation of undecaprenyl diphosphate (UPP). Confers resistance to bacitracin. The sequence is that of Undecaprenyl-diphosphatase from Rubrobacter xylanophilus (strain DSM 9941 / JCM 11954 / NBRC 16129 / PRD-1).